Here is a 326-residue protein sequence, read N- to C-terminus: Diaminopimelate epimerase (326 aa).

The substrate site is built by asparagine 13 and asparagine 72. Catalysis depends on cysteine 81, which acts as the Proton donor. Substrate is bound by residues 82–83 (GN), asparagine 169, asparagine 205, and 223–224 (ER). Cysteine 232 serves as the catalytic Proton acceptor. 233-234 (GT) is a substrate binding site.

This sequence belongs to the diaminopimelate epimerase family. Homodimer.

It localises to the cytoplasm. It carries out the reaction (2S,6S)-2,6-diaminopimelate = meso-2,6-diaminopimelate. It functions in the pathway amino-acid biosynthesis; L-lysine biosynthesis via DAP pathway; DL-2,6-diaminopimelate from LL-2,6-diaminopimelate: step 1/1. Its function is as follows. Catalyzes the stereoinversion of LL-2,6-diaminopimelate (L,L-DAP) to meso-diaminopimelate (meso-DAP), a precursor of L-lysine and an essential component of the bacterial peptidoglycan. The protein is Diaminopimelate epimerase of Enterococcus faecalis (strain ATCC 700802 / V583).